The following is a 669-amino-acid chain: Serine/threonine-protein kinase hippo (669 aa).

A phosphoserine mark is found at Ser-30 and Ser-33. The 252-residue stretch at 42 to 293 (FDIMYKLGEG…ATELLEHEFI (252 aa)) folds into the Protein kinase domain. ATP-binding positions include 48–56 (LGEGSYGSV) and Lys-71. Asp-161 (proton acceptor) is an active-site residue. Residue Thr-195 is modified to Phosphothreonine; by Tao. Over residues 432–445 (MVINSDSDDSTTAK) the composition is skewed to polar residues. Residues 432 to 508 (MVINSDSDDS…QQQQQDEQHL (77 aa)) form a disordered region. Basic and acidic residues predominate over residues 460–479 (FLEHFDRKNAGDGRGDEKPI). Residues 490–503 (QQQQQQQQQQQQQQ) are compositionally biased toward low complexity. Residues 608–655 (FEFLKFLTFDDLNQRLCNIDHEMELEIEQLNKKYNAKRQPIVDAMNAK) enclose the SARAH domain.

This sequence belongs to the protein kinase superfamily. STE Ser/Thr protein kinase family. STE20 subfamily. In terms of assembly, homodimer. Interacts with Sav and Wts. Interacts (via SARAH domain) with Ex. Interacts with Kibra. In terms of processing, autophosphorylated. In terms of tissue distribution, expressed in CNS during embryogenesis. In third instar larvae, it is expressed throughout all imaginal disks.

The protein resides in the apical cell membrane. The protein localises to the cytoplasm. It carries out the reaction L-seryl-[protein] + ATP = O-phospho-L-seryl-[protein] + ADP + H(+). The enzyme catalyses L-threonyl-[protein] + ATP = O-phospho-L-threonyl-[protein] + ADP + H(+). Functionally, plays a key role in the Hippo/SWH (Sav/Wts/Hpo) signaling pathway, a signaling pathway that plays a pivotal role in organ size control and tumor suppression by restricting proliferation and promoting apoptosis. The core of this pathway is composed of a kinase cascade wherein Hippo (Hpo), in complex with its regulatory protein Salvador (Sav), phosphorylates and activates Warts (Wts) in complex with its regulatory protein Mats, which in turn phosphorylates and inactivates the Yorkie (Yki) oncoprotein. The Hippo/SWH signaling pathway inhibits the activity of the transcriptional complex formed by Scalloped (sd) and Yki and the target genes of this pathway include cyclin-E (cycE), diap1 and bantam. Phosphorylates Sav, Wts and Th/DIAP1. Regulates the level of Th/DIAP1 apoptosis inhibitor. The protein is Serine/threonine-protein kinase hippo (hpo) of Drosophila melanogaster (Fruit fly).